Consider the following 142-residue polypeptide: Hemoglobin subunit alpha (142 aa).

One can recognise a Globin domain in the interval Val2–Arg142. Ser4 is subject to Phosphoserine. Lys8 carries the N6-succinyllysine modification. The residue at position 9 (Thr9) is a Phosphothreonine. Lys12 is subject to N6-succinyllysine. N6-acetyllysine; alternate is present on Lys17. Position 17 is an N6-succinyllysine; alternate (Lys17). Tyr25 carries the phosphotyrosine modification. Residue Ser36 is modified to Phosphoserine. The residue at position 41 (Lys41) is an N6-succinyllysine. Ser50 carries the phosphoserine modification. O2 is bound at residue His59. His88 contributes to the heme b binding site. Ser103 is subject to Phosphoserine. Phosphothreonine is present on Thr109. A phosphoserine mark is found at Ser125 and Ser132. A phosphothreonine mark is found at Thr135 and Thr138. Ser139 bears the Phosphoserine mark.

This sequence belongs to the globin family. Heterotetramer of two alpha chains and two beta chains in adult hemoglobin A (HbA); two alpha chains and two delta chains in adult hemoglobin A2 (HbA2); two alpha chains and two epsilon chains in early embryonic hemoglobin Gower-2; two alpha chains and two gamma chains in fetal hemoglobin F (HbF). Red blood cells.

Its function is as follows. Involved in oxygen transport from the lung to the various peripheral tissues. In terms of biological role, hemopressin acts as an antagonist peptide of the cannabinoid receptor CNR1. Hemopressin-binding efficiently blocks cannabinoid receptor CNR1 and subsequent signaling. The sequence is that of Hemoglobin subunit alpha (HBA1) from Pan paniscus (Pygmy chimpanzee).